Here is a 285-residue protein sequence, read N- to C-terminus: Probable E3 ubiquitin-protein ligase IE1 (285 aa).

Residues 1–201 lie on the Cytoplasmic side of the membrane; sequence MASKDSDVRC…LPGYWDRDDR (201 aa). The RING-CH-type zinc-finger motif lies at 124-183; it reads SIDEEGKQCWICRDGESLPEARYCNCYGDLQYCHEECLKTWISMSGEKKCKFCQTPYKVN. The Zn(2+) site is built by C132, C135, C147, C149, H157, C160, C173, and C176. A helical membrane pass occupies residues 202-222; the sequence is FVFIAGFIGMGTILAGWIASF. The Extracellular segment spans residues 223–238; that stretch reads FYLLVVLCGKYFTYKD. The helical transmembrane segment at 239–259 threads the bilayer; the sequence is VMIVVGGLAIIQVVGLMFSLF. Topologically, residues 260 to 285 are cytoplasmic; the sequence is MYFQIGNLLRQYINYMTETNIDPLRT.

The protein resides in the membrane. The catalysed reaction is S-ubiquitinyl-[E2 ubiquitin-conjugating enzyme]-L-cysteine + [acceptor protein]-L-lysine = [E2 ubiquitin-conjugating enzyme]-L-cysteine + N(6)-ubiquitinyl-[acceptor protein]-L-lysine.. The protein operates within protein modification; protein ubiquitination. In terms of biological role, controls the expression of later classes of genes and also of the IE genes (Potential). E3 ubiquitin-protein ligase. E3 ubiquitin ligases accept ubiquitin from an E2 ubiquitin-conjugating enzyme in the form of a thioester and then directly transfer the ubiquitin to targeted substrates. The chain is Probable E3 ubiquitin-protein ligase IE1 (IE1) from Bovine herpesvirus 4 (strain DN-599) (BoHV-4).